The primary structure comprises 332 residues: L-lactate dehydrogenase A chain (332 aa).

The residue at position 2 (Ala2) is an N-acetylalanine. Lys5 carries the N6-acetyllysine; alternate modification. Lys5 is modified (N6-succinyllysine; alternate). The residue at position 14 (Lys14) is an N6-acetyllysine. 29–57 (GAVGMACAISILMKDLADELALVDVIEDK) lines the NAD(+) pocket. Residue Lys57 is modified to N6-acetyllysine; alternate. Lys57 participates in a covalent cross-link: Glycyl lysine isopeptide (Lys-Gly) (interchain with G-Cter in SUMO2); alternate. The residue at position 81 (Lys81) is an N6-acetyllysine. Arg99 contributes to the NAD(+) binding site. A substrate-binding site is contributed by Arg106. An N6-acetyllysine; alternate modification is found at Lys118. Residue Lys118 is modified to N6-succinyllysine; alternate. The residue at position 126 (Lys126) is an N6-acetyllysine. Asn138 serves as a coordination point for NAD(+). Substrate contacts are provided by Asn138 and Arg169. The active-site Proton acceptor is His193. Position 213 is a phosphoserine (Ser213). An N6-acetyllysine mark is found at Lys224 and Lys232. At Tyr239 the chain carries Phosphotyrosine. An N6-acetyllysine modification is found at Lys243. Thr248 is a substrate binding site. A Phosphothreonine modification is found at Thr309. N6-acetyllysine; alternate is present on Lys318. Lys318 is subject to N6-succinyllysine; alternate. Residue Thr322 is modified to Phosphothreonine.

Belongs to the LDH/MDH superfamily. LDH family. In terms of assembly, homotetramer. Interacts with PTEN upstream reading frame protein MP31. Post-translationally, ISGylated.

It localises to the cytoplasm. It carries out the reaction (S)-lactate + NAD(+) = pyruvate + NADH + H(+). It participates in fermentation; pyruvate fermentation to lactate; (S)-lactate from pyruvate: step 1/1. Interconverts simultaneously and stereospecifically pyruvate and lactate with concomitant interconversion of NADH and NAD(+). The chain is L-lactate dehydrogenase A chain (Ldha) from Rattus norvegicus (Rat).